The sequence spans 1104 residues: Carbamoyl phosphate synthase large chain (1104 aa).

The carboxyphosphate synthetic domain stretch occupies residues M1–E402. R129, R169, G175, G176, E208, I210, E215, G241, V242, H243, Q285, and E299 together coordinate ATP. The ATP-grasp 1 domain maps to K133–V328. The Mg(2+) site is built by Q285, E299, and N301. Positions 285, 299, and 301 each coordinate Mn(2+). Residues K403–T547 form an oligomerization domain region. The carbamoyl phosphate synthetic domain stretch occupies residues R548 to Y948. An ATP-grasp 2 domain is found at G676–A867. R712, R751, L753, E758, G783, I784, H785, S786, Q826, and E838 together coordinate ATP. The Mg(2+) site is built by Q826, E838, and N840. Residues Q826, E838, and N840 each contribute to the Mn(2+) site. The MGS-like domain maps to G949–A1099. The allosteric domain stretch occupies residues G949–A1104.

This sequence belongs to the CarB family. As to quaternary structure, composed of two chains; the small (or glutamine) chain promotes the hydrolysis of glutamine to ammonia, which is used by the large (or ammonia) chain to synthesize carbamoyl phosphate. Tetramer of heterodimers (alpha,beta)4. Mg(2+) serves as cofactor. Mn(2+) is required as a cofactor.

The enzyme catalyses hydrogencarbonate + L-glutamine + 2 ATP + H2O = carbamoyl phosphate + L-glutamate + 2 ADP + phosphate + 2 H(+). It catalyses the reaction hydrogencarbonate + NH4(+) + 2 ATP = carbamoyl phosphate + 2 ADP + phosphate + 2 H(+). It participates in amino-acid biosynthesis; L-arginine biosynthesis; carbamoyl phosphate from bicarbonate: step 1/1. Its pathway is pyrimidine metabolism; UMP biosynthesis via de novo pathway; (S)-dihydroorotate from bicarbonate: step 1/3. Large subunit of the glutamine-dependent carbamoyl phosphate synthetase (CPSase). CPSase catalyzes the formation of carbamoyl phosphate from the ammonia moiety of glutamine, carbonate, and phosphate donated by ATP, constituting the first step of 2 biosynthetic pathways, one leading to arginine and/or urea and the other to pyrimidine nucleotides. The large subunit (synthetase) binds the substrates ammonia (free or transferred from glutamine from the small subunit), hydrogencarbonate and ATP and carries out an ATP-coupled ligase reaction, activating hydrogencarbonate by forming carboxy phosphate which reacts with ammonia to form carbamoyl phosphate. The protein is Carbamoyl phosphate synthase large chain of Kineococcus radiotolerans (strain ATCC BAA-149 / DSM 14245 / SRS30216).